A 93-amino-acid polypeptide reads, in one-letter code: Small ribosomal subunit protein uS19 (93 aa).

The protein belongs to the universal ribosomal protein uS19 family.

Its function is as follows. Protein S19 forms a complex with S13 that binds strongly to the 16S ribosomal RNA. This is Small ribosomal subunit protein uS19 from Mycobacterium marinum (strain ATCC BAA-535 / M).